The chain runs to 304 residues: N-acetylmuramic acid 6-phosphate etherase (304 aa).

Residues 62 to 225 (IVEAFQQGGR…TTASMILIGK (164 aa)) form the SIS domain. Glu90 serves as the catalytic Proton donor. Glu121 is a catalytic residue.

The protein belongs to the GCKR-like family. MurNAc-6-P etherase subfamily. In terms of assembly, homodimer.

The catalysed reaction is N-acetyl-D-muramate 6-phosphate + H2O = N-acetyl-D-glucosamine 6-phosphate + (R)-lactate. Its pathway is amino-sugar metabolism; 1,6-anhydro-N-acetylmuramate degradation. The protein operates within amino-sugar metabolism; N-acetylmuramate degradation. It participates in cell wall biogenesis; peptidoglycan recycling. Functionally, specifically catalyzes the cleavage of the D-lactyl ether substituent of MurNAc 6-phosphate, producing GlcNAc 6-phosphate and D-lactate. Together with AnmK, is also required for the utilization of anhydro-N-acetylmuramic acid (anhMurNAc) either imported from the medium or derived from its own cell wall murein, and thus plays a role in cell wall recycling. This chain is N-acetylmuramic acid 6-phosphate etherase, found in Glaesserella parasuis serovar 5 (strain SH0165) (Haemophilus parasuis).